The following is a 626-amino-acid chain: Protein MICRORCHIDIA 2 (626 aa).

Positions 579 to 626 (MRCEEYIKKENETEQTVKSLEKELEEFKSKCAHLALLVDAKKKEMQQA) form a coiled coil.

This sequence belongs to the MORC ATPase protein family. In terms of assembly, homodimer and heterodimer with MORC6. Component of an RNA-directed DNA methylation (RdDM) complex that contains at least MORC6, MORC1/CRT1, MORC2, SWI3D and SUVH9. Binds directly to SUVH9. It depends on Mg(2+) as a cofactor. The cofactor is Mn(2+).

The protein resides in the nucleus. The protein localises to the endosome. Its function is as follows. Mediator of defense signaling triggered by distinct classes of R proteins. Required during hypersensitive response (HR) that confers disease resistance to turnip crinkle virus (TCV). Contributes to resistance against Pseudomonas syringae and Hyaloperonospora arabidopsidis, at early stages prior to cytosolic calcium ions Ca(2+) accumulation. Required for pathogen-associated molecular pattern (PAMP)-triggered immunity, basal resistance, non-host resistance and systemic acquired resistance (SAR). Involved in RNA-directed DNA methylation (RdDM) as a component of the RdDM machinery and required for gene silencing. May also be involved in the regulation of chromatin architecture to maintain gene silencing. Exhibits ATPase activity. The chain is Protein MICRORCHIDIA 2 from Arabidopsis thaliana (Mouse-ear cress).